Reading from the N-terminus, the 176-residue chain is Mitochondrial inner membrane protein Mpv17 (176 aa).

The next 4 membrane-spanning stretches (helical) occupy residues 18–38 (VQVL…QQLV), 53–73 (TMVS…YKVL), 94–114 (GGFA…LNGM), and 131–151 (LITN…LVPL).

Belongs to the peroxisomal membrane protein PXMP2/4 family. In terms of tissue distribution, high levels in heart, kidney, and brain, intermediate levels in testis, and low levels in liver and spleen.

The protein localises to the mitochondrion inner membrane. Functionally, non-selective channel that modulates the membrane potential under normal conditions and oxidative stress, and is involved in mitochondrial homeostasis. Involved in mitochondrial deoxynucleoside triphosphates (dNTP) pool homeostasis and mitochondrial DNA (mtDNA) maintenance. May be involved in the regulation of reactive oxygen species metabolism and the control of oxidative phosphorylation. The polypeptide is Mitochondrial inner membrane protein Mpv17 (Mus musculus (Mouse)).